Reading from the N-terminus, the 258-residue chain is 5'-nucleotidase SurE (258 aa).

Residues aspartate 14, aspartate 15, serine 45, and asparagine 101 each coordinate a divalent metal cation.

The protein belongs to the SurE nucleotidase family. It depends on a divalent metal cation as a cofactor.

The protein resides in the cytoplasm. The catalysed reaction is a ribonucleoside 5'-phosphate + H2O = a ribonucleoside + phosphate. Its function is as follows. Nucleotidase that shows phosphatase activity on nucleoside 5'-monophosphates. The chain is 5'-nucleotidase SurE from Chlorobium limicola (strain DSM 245 / NBRC 103803 / 6330).